A 179-amino-acid polypeptide reads, in one-letter code: Large ribosomal subunit protein uL5 (179 aa).

The protein belongs to the universal ribosomal protein uL5 family. In terms of assembly, part of the 50S ribosomal subunit; part of the 5S rRNA/L5/L18/L25 subcomplex. Contacts the 5S rRNA and the P site tRNA. Forms a bridge to the 30S subunit in the 70S ribosome.

In terms of biological role, this is one of the proteins that bind and probably mediate the attachment of the 5S RNA into the large ribosomal subunit, where it forms part of the central protuberance. In the 70S ribosome it contacts protein S13 of the 30S subunit (bridge B1b), connecting the 2 subunits; this bridge is implicated in subunit movement. Contacts the P site tRNA; the 5S rRNA and some of its associated proteins might help stabilize positioning of ribosome-bound tRNAs. In Prochlorococcus marinus (strain AS9601), this protein is Large ribosomal subunit protein uL5.